Here is a 328-residue protein sequence, read N- to C-terminus: D-cysteine desulfhydrase (328 aa).

K51 bears the N6-(pyridoxal phosphate)lysine mark.

Belongs to the ACC deaminase/D-cysteine desulfhydrase family. As to quaternary structure, homodimer. Pyridoxal 5'-phosphate is required as a cofactor.

The catalysed reaction is D-cysteine + H2O = hydrogen sulfide + pyruvate + NH4(+) + H(+). Its function is as follows. Catalyzes the alpha,beta-elimination reaction of D-cysteine and of several D-cysteine derivatives. It could be a defense mechanism against D-cysteine. The chain is D-cysteine desulfhydrase from Escherichia coli (strain SMS-3-5 / SECEC).